We begin with the raw amino-acid sequence, 203 residues long: LexA repressor (203 aa).

Residues 30 to 50 (VREICQAVSLKSTSTVHGHLK) constitute a DNA-binding region (H-T-H motif). Active-site for autocatalytic cleavage activity residues include serine 127 and lysine 164.

It belongs to the peptidase S24 family. As to quaternary structure, homodimer.

The catalysed reaction is Hydrolysis of Ala-|-Gly bond in repressor LexA.. Its function is as follows. Represses a number of genes involved in the response to DNA damage (SOS response), including recA and lexA. In the presence of single-stranded DNA, RecA interacts with LexA causing an autocatalytic cleavage which disrupts the DNA-binding part of LexA, leading to derepression of the SOS regulon and eventually DNA repair. The chain is LexA repressor from Clostridium perfringens (strain SM101 / Type A).